Reading from the N-terminus, the 393-residue chain is Staphopain B (393 aa).

The signal sequence occupies residues 1–36 (MNSSYKSRVFNIISIIMVSMLILSLGAFANNNKAKA). Residues 37–219 (DSHSKQLEIN…KVEENEAIQE (183 aa)) constitute a propeptide that is removed on maturation. Catalysis depends on residues Cys243, His340, and Asn360.

The protein belongs to the peptidase C47 family. In terms of assembly, in the cytoplasm, prematurely activated/folded SspB forms a stable non-covalent complex with SspC. Proteolytically cleaved by staphylococcal serine protease (SspA).

The protein localises to the secreted. Its activity is regulated as follows. Prematurely activated/folded staphopain B is inhibited by staphostatin B (SspC), which is probably required to protect staphylococcal cytoplasmic proteins from degradation by SspB. Functionally, cysteine protease that plays an important role in the inhibition of host innate immune response. Degrades host elastin, fibrogen, fibronectin and kininogen. Blocks phagocytosis of opsonised S.aureus by neutrophils and monocytes by inducing their death in a proteolytic activity-dependent manner. Decreases surface expression of the 'don't eat me' signal CD31 on neutrophils. Cleaves host galectin-3/LGALS3, thereby inhibiting the neutrophil-activating ability of the lectin. The sequence is that of Staphopain B (sspB) from Staphylococcus aureus (strain Mu50 / ATCC 700699).